The chain runs to 522 residues: Flavin-dependent halogenase armH1 (522 aa).

Positions 16, 19, and 49 each coordinate FAD. Chloride-binding residues include S328 and G329. I330 contributes to the FAD binding site.

The protein belongs to the flavin-dependent halogenase family.

It catalyses the reaction melleolide F + FADH2 + chloride + O2 = 6'-chloromelleolide F + FAD + 2 H2O + H(+). Functionally, flavin-dependent halogenase involved in the biosynthesis of melleolides, a range of antifungal and phytotoxic polyketide derivatives composed of an orsellinic acid (OA) moiety esterified to various sesquiterpene alcohols. The halogenase catalyzes the transfer of a single chlorine atom to the melleolide backbone, resulting in a 6'-chloromelleolide product. The enzyme acts on free substrate and does not depend on carrier-protein-dependent acceptor molecules. This chain is Flavin-dependent halogenase armH1, found in Armillaria mellea (Honey mushroom).